A 333-amino-acid chain; its full sequence is Protein-methionine-sulfoxide reductase catalytic subunit MsrP (333 aa).

A signal peptide (tat-type signal) is located at residues 1–43; that stretch reads MHKHRKPTEADVTPESLFYQRRRILKALGISAAALSLPFSAQA. Mo-molybdopterin contacts are provided by residues N87, 90–91, C145, T180, N232, R237, and 248–250; these read YE and NIK.

This sequence belongs to the MsrP family. Heterodimer of a catalytic subunit (MsrP) and a heme-binding subunit (MsrQ). Requires Mo-molybdopterin as cofactor. Predicted to be exported by the Tat system. The position of the signal peptide cleavage has not been experimentally proven.

It is found in the periplasm. The catalysed reaction is L-methionyl-[protein] + a quinone + H2O = L-methionyl-(S)-S-oxide-[protein] + a quinol. It carries out the reaction L-methionyl-[protein] + a quinone + H2O = L-methionyl-(R)-S-oxide-[protein] + a quinol. In terms of biological role, part of the MsrPQ system that repairs oxidized periplasmic proteins containing methionine sulfoxide residues (Met-O), using respiratory chain electrons. Thus protects these proteins from oxidative-stress damage caused by reactive species of oxygen and chlorine generated by the host defense mechanisms. MsrPQ is essential for the maintenance of envelope integrity under bleach stress, rescuing a wide series of structurally unrelated periplasmic proteins from methionine oxidation. The catalytic subunit MsrP is non-stereospecific, being able to reduce both (R-) and (S-) diastereoisomers of methionine sulfoxide. In Pectobacterium carotovorum subsp. carotovorum (strain PC1), this protein is Protein-methionine-sulfoxide reductase catalytic subunit MsrP.